A 149-amino-acid chain; its full sequence is Prefoldin subunit alpha (149 aa).

The protein belongs to the prefoldin subunit alpha family. As to quaternary structure, heterohexamer of two alpha and four beta subunits.

It is found in the cytoplasm. Functionally, molecular chaperone capable of stabilizing a range of proteins. Seems to fulfill an ATP-independent, HSP70-like function in archaeal de novo protein folding. This Methanospirillum hungatei JF-1 (strain ATCC 27890 / DSM 864 / NBRC 100397 / JF-1) protein is Prefoldin subunit alpha.